The following is a 256-amino-acid chain: 5'-nucleotidase SurE (256 aa).

Residues aspartate 8, aspartate 9, serine 40, and asparagine 92 each coordinate a divalent metal cation.

Belongs to the SurE nucleotidase family. The cofactor is a divalent metal cation.

It localises to the cytoplasm. It catalyses the reaction a ribonucleoside 5'-phosphate + H2O = a ribonucleoside + phosphate. Functionally, nucleotidase that shows phosphatase activity on nucleoside 5'-monophosphates. In Allorhizobium ampelinum (strain ATCC BAA-846 / DSM 112012 / S4) (Agrobacterium vitis (strain S4)), this protein is 5'-nucleotidase SurE.